The following is a 167-amino-acid chain: SsrA-binding protein (167 aa).

Positions 137–167 (GKQSHDKRDAAKERDWQRDKQRVMRRHNRDA) are disordered. The segment covering 139–158 (QSHDKRDAAKERDWQRDKQR) has biased composition (basic and acidic residues).

It belongs to the SmpB family.

The protein localises to the cytoplasm. Its function is as follows. Required for rescue of stalled ribosomes mediated by trans-translation. Binds to transfer-messenger RNA (tmRNA), required for stable association of tmRNA with ribosomes. tmRNA and SmpB together mimic tRNA shape, replacing the anticodon stem-loop with SmpB. tmRNA is encoded by the ssrA gene; the 2 termini fold to resemble tRNA(Ala) and it encodes a 'tag peptide', a short internal open reading frame. During trans-translation Ala-aminoacylated tmRNA acts like a tRNA, entering the A-site of stalled ribosomes, displacing the stalled mRNA. The ribosome then switches to translate the ORF on the tmRNA; the nascent peptide is terminated with the 'tag peptide' encoded by the tmRNA and targeted for degradation. The ribosome is freed to recommence translation, which seems to be the essential function of trans-translation. This is SsrA-binding protein from Xanthomonas campestris pv. campestris (strain 8004).